A 341-amino-acid chain; its full sequence is tRNA N6-adenosine threonylcarbamoyltransferase (341 aa).

Fe cation-binding residues include H111 and H115. Substrate contacts are provided by residues L134–G138, D167, G180, and N274. D302 contacts Fe cation.

It belongs to the KAE1 / TsaD family. Requires Fe(2+) as cofactor.

It is found in the cytoplasm. The catalysed reaction is L-threonylcarbamoyladenylate + adenosine(37) in tRNA = N(6)-L-threonylcarbamoyladenosine(37) in tRNA + AMP + H(+). In terms of biological role, required for the formation of a threonylcarbamoyl group on adenosine at position 37 (t(6)A37) in tRNAs that read codons beginning with adenine. Is involved in the transfer of the threonylcarbamoyl moiety of threonylcarbamoyl-AMP (TC-AMP) to the N6 group of A37, together with TsaE and TsaB. TsaD likely plays a direct catalytic role in this reaction. This chain is tRNA N6-adenosine threonylcarbamoyltransferase, found in Paraburkholderia phymatum (strain DSM 17167 / CIP 108236 / LMG 21445 / STM815) (Burkholderia phymatum).